We begin with the raw amino-acid sequence, 263 residues long: UPF0328 protein ECU08_2060 (263 aa).

Belongs to the UPF0328 family.

This chain is UPF0328 protein ECU08_2060, found in Encephalitozoon cuniculi (strain GB-M1) (Microsporidian parasite).